We begin with the raw amino-acid sequence, 275 residues long: Large ribosomal subunit protein uL2c (275 aa).

Residues 222–258 are disordered; it reads GSAMNPVDHPHGGGEGRAPIGRARPVSPWGRPALGAK.

Belongs to the universal ribosomal protein uL2 family. As to quaternary structure, part of the 50S ribosomal subunit.

The protein resides in the plastid. Its subcellular location is the chloroplast. This is Large ribosomal subunit protein uL2c (rpl2) from Chlorella vulgaris (Green alga).